Consider the following 500-residue polypeptide: Probable glycine dehydrogenase (decarboxylating) subunit 2 (500 aa).

Lys273 is subject to N6-(pyridoxal phosphate)lysine.

The protein belongs to the GcvP family. C-terminal subunit subfamily. The glycine cleavage system is composed of four proteins: P, T, L and H. In this organism, the P 'protein' is a heterodimer of two subunits. Pyridoxal 5'-phosphate serves as cofactor.

It carries out the reaction N(6)-[(R)-lipoyl]-L-lysyl-[glycine-cleavage complex H protein] + glycine + H(+) = N(6)-[(R)-S(8)-aminomethyldihydrolipoyl]-L-lysyl-[glycine-cleavage complex H protein] + CO2. Its function is as follows. The glycine cleavage system catalyzes the degradation of glycine. The P protein binds the alpha-amino group of glycine through its pyridoxal phosphate cofactor; CO(2) is released and the remaining methylamine moiety is then transferred to the lipoamide cofactor of the H protein. The sequence is that of Probable glycine dehydrogenase (decarboxylating) subunit 2 from Rhodopirellula baltica (strain DSM 10527 / NCIMB 13988 / SH1).